Reading from the N-terminus, the 262-residue chain is ATP synthase subunit a (262 aa).

A run of 5 helical transmembrane segments spans residues 24–44 (AVHL…LFVF), 84–104 (VIAP…AIDL), 129–149 (DISA…FYTV), 194–214 (LFGN…MYMA), and 228–248 (LVWA…FMML).

It belongs to the ATPase A chain family. F-type ATPases have 2 components, CF(1) - the catalytic core - and CF(0) - the membrane proton channel. CF(1) has five subunits: alpha(3), beta(3), gamma(1), delta(1), epsilon(1). CF(0) has three main subunits: a(1), b(2) and c(9-12). The alpha and beta chains form an alternating ring which encloses part of the gamma chain. CF(1) is attached to CF(0) by a central stalk formed by the gamma and epsilon chains, while a peripheral stalk is formed by the delta and b chains.

The protein localises to the cell inner membrane. Functionally, key component of the proton channel; it plays a direct role in the translocation of protons across the membrane. In Actinobacillus pleuropneumoniae serotype 3 (strain JL03), this protein is ATP synthase subunit a.